Here is an 869-residue protein sequence, read N- to C-terminus: Dynamin-3 (869 aa).

A Dynamin-type G domain is found at 28 to 294 (LLELPQIAVV…LTNHIRDTLP (267 aa)). The G1 motif stretch occupies residues 38–45 (GGQSAGKS). Position 38–46 (38–46 (GGQSAGKSS)) interacts with GTP. Positions 64 to 66 (VTR) are G2 motif. The interval 136-139 (DLPG) is G3 motif. The tract at residues 205–208 (TKLD) is G4 motif. 205-211 (TKLDLMD) is a GTP binding site. A Phosphotyrosine modification is found at Y231. The interval 235–238 (VNRS) is G5 motif. 236-239 (NRSQ) is a binding site for GTP. Residue K299 is modified to N6-acetyllysine. The PH domain occupies 515-621 (QGTNLPPSRQ…ACDSQEDVDS (107 aa)). Phosphotyrosine is present on Y603. Residue K604 is modified to N6-acetyllysine. Residues 659–750 (VETIRNLVDS…IIGDISTATV (92 aa)) form the GED domain. Residues 747–869 (TATVSTPAPP…IRPLESSLLD (123 aa)) are disordered. A phosphoserine mark is found at S769 and S773. Composition is skewed to pro residues over residues 797-822 (PAIPSPGPHSGAPPVPFRPGPLPPFP) and 832-855 (PQVPSRPTRAPPSVPSRRPPPSPT). S853 carries the phosphoserine modification.

The protein belongs to the TRAFAC class dynamin-like GTPase superfamily. Dynamin/Fzo/YdjA family.

The protein resides in the cytoplasm. It localises to the cytoskeleton. It catalyses the reaction GTP + H2O = GDP + phosphate + H(+). Functionally, microtubule-associated force-producing protein involved in producing microtubule bundles and able to bind and hydrolyze GTP. Most probably involved in vesicular trafficking processes, in particular endocytosis. In Homo sapiens (Human), this protein is Dynamin-3 (DNM3).